Consider the following 327-residue polypeptide: Olfactory receptor 6A2 (327 aa).

Topologically, residues 1-26 (MEWRNHSGRVSEFVLLGFPAPAPLQV) are extracellular. Asparagine 5 carries N-linked (GlcNAc...) asparagine glycosylation. The chain crosses the membrane as a helical span at residues 27–47 (LLFALLLLAYVLVLTENTLII). The Cytoplasmic segment spans residues 48–55 (MAIRNHST). The helical transmembrane segment at 56 to 76 (LHKPMYFFLANMSFLEIWYVT) threads the bilayer. Topologically, residues 77 to 104 (VTIPKMLAGFVGSKQDHGQLISFEGCMT) are extracellular. Cysteine 102 and cysteine 194 are oxidised to a cystine. Residues 105–125 (QLYFFLGLGCTECVLLAVMAY) traverse the membrane as a helical segment. Topologically, residues 126 to 144 (DRYMAICYPLHYPVIVSGR) are cytoplasmic. Residues 145–165 (LCVQMAAGSWAGGFGISMVKV) traverse the membrane as a helical segment. At 166–201 (FLISGLSYCGPNIINHFFCDVSPLLNLSCTDMSTAE) the chain is on the extracellular side. An N-linked (GlcNAc...) asparagine glycan is attached at asparagine 191. The chain crosses the membrane as a helical span at residues 202 to 222 (LTDFILAIFILLGPLSVTGAS). Over 223 to 242 (YVAITGAVMHIPSAAGRYKA) the chain is Cytoplasmic. Residues 243–263 (FSTCASHLTVVIIFYAASIFI) form a helical membrane-spanning segment. The Extracellular portion of the chain corresponds to 264–276 (YARPKALSAFDTN). Residues 277–297 (KLVSVLYAVIVPLLNPIIYCL) traverse the membrane as a helical segment. The Cytoplasmic segment spans residues 298–327 (RNQEVKRALCCTLHLYQHQDPDPKKASRNV).

This sequence belongs to the G-protein coupled receptor 1 family.

The protein resides in the cell membrane. In terms of biological role, odorant receptor. In Homo sapiens (Human), this protein is Olfactory receptor 6A2 (OR6A2).